The following is a 102-amino-acid chain: MALTKAELTDLLFENIGLNKREAKEIVECFYEEMRAALQNGDGVKLSGFGNFQLRTKPQRPGRNPKTGEEIPISARRVVTFHASQKLKSMVEANYRGESGTN.

Residues 49–70 (FGNFQLRTKPQRPGRNPKTGEE) form a disordered region.

It belongs to the bacterial histone-like protein family. Heterodimer of an alpha and a beta chain.

This protein is one of the two subunits of integration host factor, a specific DNA-binding protein that functions in genetic recombination as well as in transcriptional and translational control. The polypeptide is Integration host factor subunit alpha (Nitrosomonas europaea (strain ATCC 19718 / CIP 103999 / KCTC 2705 / NBRC 14298)).